We begin with the raw amino-acid sequence, 379 residues long: S-adenosylmethionine:tRNA ribosyltransferase-isomerase (379 aa).

The interval 35–58 (AESRPHAESVPHAESRPHAESAFS) is disordered.

Belongs to the QueA family. Monomer.

The protein localises to the cytoplasm. It carries out the reaction 7-aminomethyl-7-carbaguanosine(34) in tRNA + S-adenosyl-L-methionine = epoxyqueuosine(34) in tRNA + adenine + L-methionine + 2 H(+). It participates in tRNA modification; tRNA-queuosine biosynthesis. Functionally, transfers and isomerizes the ribose moiety from AdoMet to the 7-aminomethyl group of 7-deazaguanine (preQ1-tRNA) to give epoxyqueuosine (oQ-tRNA). This chain is S-adenosylmethionine:tRNA ribosyltransferase-isomerase, found in Rhizobium leguminosarum bv. trifolii (strain WSM2304).